A 32-amino-acid polypeptide reads, in one-letter code: Photosystem II reaction center protein T (32 aa).

A helical membrane pass occupies residues 3–23 (ALVYTFLLIGTLVVIFFAIFF).

It belongs to the PsbT family. PSII is composed of 1 copy each of membrane proteins PsbA, PsbB, PsbC, PsbD, PsbE, PsbF, PsbH, PsbI, PsbJ, PsbK, PsbL, PsbM, PsbT, PsbX, PsbY, PsbZ, Psb30/Ycf12, at least 3 peripheral proteins of the oxygen-evolving complex and a large number of cofactors. It forms dimeric complexes.

It localises to the plastid. The protein resides in the chloroplast thylakoid membrane. Its function is as follows. Found at the monomer-monomer interface of the photosystem II (PS II) dimer, plays a role in assembly and dimerization of PSII. PSII is a light-driven water plastoquinone oxidoreductase, using light energy to abstract electrons from H(2)O, generating a proton gradient subsequently used for ATP formation. The protein is Photosystem II reaction center protein T of Emiliania huxleyi (Coccolithophore).